A 221-amino-acid chain; its full sequence is uncharacterized protein (221 aa).

Positions 40 to 162 are disordered; the sequence is TIEVEPSPVQ…EPPEKVELSP (123 aa). Residues 47–60 are compositionally biased toward polar residues; sequence PVQQDNPPISSEQA. The segment covering 82 to 92 has biased composition (low complexity); it reads SSAQQEATAQT.

This is an uncharacterized protein from Homo sapiens (Human).